Consider the following 84-residue polypeptide: Anaphase-promoting complex subunit 11 (84 aa).

Residues Cys-23, Cys-26, Cys-34, Cys-37, Cys-44, Cys-51, His-53, His-56, His-58, Cys-59, Cys-73, and Cys-76 each contribute to the Zn(2+) site. An RING-type zinc finger spans residues 34-77 (CPDCKVPGDDCPLVWGQCSHCFHMHCILKWLNAQQVQQHCPMCR).

Belongs to the RING-box family. In terms of assembly, the mammalian APC/C is composed at least of 14 distinct subunits ANAPC1, ANAPC2, CDC27/APC3, ANAPC4, ANAPC5, CDC16/APC6, ANAPC7, CDC23/APC8, ANAPC10, ANAPC11, CDC26/APC12, ANAPC13, ANAPC15 and ANAPC16 that assemble into a complex of at least 19 chains with a combined molecular mass of around 1.2 MDa; APC/C interacts with FZR1 and FBXO5. Interacts with the cullin domain of ANAPC2. Interacts with UBE2D2. In terms of processing, auto-ubiquitinated.

It is found in the cytoplasm. Its subcellular location is the nucleus. The protein operates within protein modification; protein ubiquitination. Its function is as follows. Together with the cullin protein ANAPC2, constitutes the catalytic component of the anaphase promoting complex/cyclosome (APC/C), a cell cycle-regulated E3 ubiquitin ligase that controls progression through mitosis and the G1 phase of the cell cycle. The APC/C complex acts by mediating ubiquitination and subsequent degradation of target proteins: it mainly mediates the formation of 'Lys-11'-linked polyubiquitin chains and, to a lower extent, the formation of 'Lys-48'- and 'Lys-63'-linked polyubiquitin chains. The APC/C complex catalyzes assembly of branched 'Lys-11'-/'Lys-48'-linked branched ubiquitin chains on target proteins. May recruit the E2 ubiquitin-conjugating enzymes to the complex. This is Anaphase-promoting complex subunit 11 (ANAPC11) from Bos taurus (Bovine).